A 216-amino-acid polypeptide reads, in one-letter code: Adenylate kinase (216 aa).

11-16 contributes to the ATP binding site; the sequence is GSGKGT. Positions 31-60 are NMP; that stretch reads ATGDLFRKAIECGDELGDTVKSYMERGELV. AMP is bound by residues Thr32, Arg37, 58–60, 86–89, and Gln93; these read ELV and GFPR. The LID stretch occupies residues 127 to 163; the sequence is GRWVCRSCQSPYQSGCAEVTKGKCSRCQGELYQRPDD. Position 128 (Arg128) interacts with ATP. 4 residues coordinate Zn(2+): Cys131, Cys134, Cys150, and Cys153. Residues Arg160 and Arg171 each coordinate AMP. Ala199 provides a ligand contact to ATP.

Belongs to the adenylate kinase family. In terms of assembly, monomer.

It is found in the cytoplasm. It carries out the reaction AMP + ATP = 2 ADP. It functions in the pathway purine metabolism; AMP biosynthesis via salvage pathway; AMP from ADP: step 1/1. Its function is as follows. Catalyzes the reversible transfer of the terminal phosphate group between ATP and AMP. Plays an important role in cellular energy homeostasis and in adenine nucleotide metabolism. In Dehalococcoides mccartyi (strain ATCC BAA-2100 / JCM 16839 / KCTC 5957 / BAV1), this protein is Adenylate kinase.